A 361-amino-acid chain; its full sequence is Peptide chain release factor 1 (361 aa).

Position 237 is an N5-methylglutamine (Gln-237).

It belongs to the prokaryotic/mitochondrial release factor family. Post-translationally, methylated by PrmC. Methylation increases the termination efficiency of RF1.

Its subcellular location is the cytoplasm. Functionally, peptide chain release factor 1 directs the termination of translation in response to the peptide chain termination codons UAG and UAA. The chain is Peptide chain release factor 1 from Thioalkalivibrio sulfidiphilus (strain HL-EbGR7).